The primary structure comprises 369 residues: Serine/threonine-protein phosphatase PP2A-1 catalytic subunit (369 aa).

Positions 1–57 are disordered; the sequence is MDTDLDVPMQDAVTEQLTPTVSEDMDLNNNSSDNNAEEFSVDDLKPGSSGIADHKSS. Mn(2+)-binding residues include Asp117, His119, Asp145, and Asn177. The active-site Proton donor is His178. Mn(2+)-binding residues include His227 and His301. Positions 348-369 are disordered; that stretch reads QYDPSVRPGEPSVSRKTPDYFL. Leucine methyl ester is present on Leu369.

It belongs to the PPP phosphatase family. PP-2A subfamily. As to quaternary structure, inactivated in a complex with phosphatase methylesterase PPE1 (PP2Ai). Interacts with phosphatase 2A activator RRD2, which can reactivate PP2Ai by dissociating the catalytic subunit from the complex. Forms a ternary complex with RRD2-TAP42. The cofactor is Mn(2+). In terms of processing, reversibly methyl esterified on Leu-369 by leucine carboxyl methyltransferase 1 (PPM1) and protein phosphatase methylesterase 1 (PPE1). Carboxyl methylation influences the affinity of the catalytic subunit for the different regulatory subunits, thereby modulating the PP2A holoenzyme's substrate specificity, enzyme activity and cellular localization.

The catalysed reaction is O-phospho-L-seryl-[protein] + H2O = L-seryl-[protein] + phosphate. It carries out the reaction O-phospho-L-threonyl-[protein] + H2O = L-threonyl-[protein] + phosphate. Functionally, exact function not known, phosphatase 2A performs an essential cellular function. This Saccharomyces cerevisiae (strain ATCC 204508 / S288c) (Baker's yeast) protein is Serine/threonine-protein phosphatase PP2A-1 catalytic subunit (PPH21).